The following is a 288-amino-acid chain: Acetyl-coenzyme A carboxylase carboxyl transferase subunit beta (288 aa).

The CoA carboxyltransferase N-terminal domain maps to Leu-34–Gln-288. Residues Cys-38, Cys-41, Cys-56, and Cys-59 each contribute to the Zn(2+) site. The C4-type zinc-finger motif lies at Cys-38–Cys-59.

The protein belongs to the AccD/PCCB family. As to quaternary structure, acetyl-CoA carboxylase is a heterohexamer composed of biotin carboxyl carrier protein (AccB), biotin carboxylase (AccC) and two subunits each of ACCase subunit alpha (AccA) and ACCase subunit beta (AccD). Zn(2+) is required as a cofactor.

It localises to the cytoplasm. The enzyme catalyses N(6)-carboxybiotinyl-L-lysyl-[protein] + acetyl-CoA = N(6)-biotinyl-L-lysyl-[protein] + malonyl-CoA. It participates in lipid metabolism; malonyl-CoA biosynthesis; malonyl-CoA from acetyl-CoA: step 1/1. Functionally, component of the acetyl coenzyme A carboxylase (ACC) complex. Biotin carboxylase (BC) catalyzes the carboxylation of biotin on its carrier protein (BCCP) and then the CO(2) group is transferred by the transcarboxylase to acetyl-CoA to form malonyl-CoA. In Streptococcus pyogenes serotype M6 (strain ATCC BAA-946 / MGAS10394), this protein is Acetyl-coenzyme A carboxylase carboxyl transferase subunit beta.